Consider the following 1067-residue polypeptide: UPF0507 protein KLLA0D01133g (1067 aa).

In terms of domain architecture, VPS9 spans 280-432 (IVEDQELEHR…FHQDTVDSLT (153 aa)).

This sequence belongs to the UPF0507 family.

This chain is UPF0507 protein KLLA0D01133g, found in Kluyveromyces lactis (strain ATCC 8585 / CBS 2359 / DSM 70799 / NBRC 1267 / NRRL Y-1140 / WM37) (Yeast).